A 328-amino-acid polypeptide reads, in one-letter code: Stress response kinase A (328 aa).

The Proton acceptor role is filled by Asp-201. 2 residues coordinate Mg(2+): Asn-206 and Asp-217. Asp-217 is a catalytic residue.

This sequence belongs to the SrkA/RdoA protein kinase family. In terms of assembly, monomer. The cofactor is Mg(2+).

It is found in the cytoplasm. The catalysed reaction is L-seryl-[protein] + ATP = O-phospho-L-seryl-[protein] + ADP + H(+). It carries out the reaction L-threonyl-[protein] + ATP = O-phospho-L-threonyl-[protein] + ADP + H(+). Functionally, a protein kinase that phosphorylates Ser and Thr residues. Probably acts to suppress the effects of stress linked to accumulation of reactive oxygen species. Probably involved in the extracytoplasmic stress response. This is Stress response kinase A from Escherichia coli O157:H7.